Reading from the N-terminus, the 130-residue chain is Small ribosomal subunit protein uS9 (130 aa).

This sequence belongs to the universal ribosomal protein uS9 family.

This Janthinobacterium sp. (strain Marseille) (Minibacterium massiliensis) protein is Small ribosomal subunit protein uS9.